The chain runs to 124 residues: Ribonuclease pancreatic (124 aa).

Residues 1 to 13 (KESAAAKFERQHM) are compositionally biased toward basic and acidic residues. The disordered stretch occupies residues 1–24 (KESAAAKFERQHMDSSTSSASSSN). Residues lysine 7 and arginine 10 each contribute to the substrate site. Histidine 12 functions as the Proton acceptor in the catalytic mechanism. 4 disulfides stabilise this stretch: cysteine 26–cysteine 84, cysteine 40–cysteine 95, cysteine 58–cysteine 110, and cysteine 65–cysteine 72. N-linked (GlcNAc...) asparagine; partial glycosylation is present at asparagine 34. Residues 41–45 (KPVNT), lysine 66, and arginine 85 each bind substrate. Catalysis depends on histidine 119, which acts as the Proton donor.

Belongs to the pancreatic ribonuclease family. Monomer. Interacts with and forms tight 1:1 complexes with RNH1. Dimerization of two such complexes may occur. Interaction with RNH1 inhibits this protein. In terms of tissue distribution, pancreas.

Its subcellular location is the secreted. The enzyme catalyses an [RNA] containing cytidine + H2O = an [RNA]-3'-cytidine-3'-phosphate + a 5'-hydroxy-ribonucleotide-3'-[RNA].. It carries out the reaction an [RNA] containing uridine + H2O = an [RNA]-3'-uridine-3'-phosphate + a 5'-hydroxy-ribonucleotide-3'-[RNA].. Functionally, endonuclease that catalyzes the cleavage of RNA on the 3' side of pyrimidine nucleotides. Acts on single-stranded and double-stranded RNA. This chain is Ribonuclease pancreatic (RNASE1), found in Aepyceros melampus (Impala).